Reading from the N-terminus, the 477-residue chain is PTS system glucose-specific EIICB component (477 aa).

Residues M1 to K14 lie on the Cytoplasmic side of the membrane. Residues M1–D388 form the PTS EIIC type-1 domain. Residues S15 to A35 traverse the membrane as a helical segment. The Periplasmic portion of the chain corresponds to N36 to E50. The helical transmembrane segment at A51–F71 threads the bilayer. Residues T72–A79 are Cytoplasmic-facing. A helical transmembrane segment spans residues L80–V100. The Periplasmic segment spans residues L101 to K111. Residues H112–F132 traverse the membrane as a helical segment. At N133–R151 the chain is on the cytoplasmic side. The helical transmembrane segment at F152–W172 threads the bilayer. The Periplasmic segment spans residues P173 to N190. The chain crosses the membrane as a helical span at residues P191–H211. The Cytoplasmic portion of the chain corresponds to H212–G248. Residues M249–W269 traverse the membrane as a helical segment. The Periplasmic segment spans residues H270–K279. Residues V280–I300 traverse the membrane as a helical segment. Residues E301–P309 are Cytoplasmic-facing. The chain crosses the membrane as a helical span at residues I310–G330. Topologically, residues M331–W355 are periplasmic. A helical transmembrane segment spans residues L356 to I376. At K377–S477 the chain is on the cytoplasmic side. Residues S399 to S477 enclose the PTS EIIB type-1 domain. The active-site Phosphocysteine intermediate; for EIIB activity is the C421. Residue C421 is modified to Phosphocysteine.

It is found in the cell inner membrane. It carries out the reaction N(pros)-phospho-L-histidyl-[protein] + D-glucose(out) = D-glucose 6-phosphate(in) + L-histidyl-[protein]. In terms of biological role, the phosphoenolpyruvate-dependent sugar phosphotransferase system (sugar PTS), a major carbohydrate active transport system, catalyzes the phosphorylation of incoming sugar substrates concomitantly with their translocation across the cell membrane. The enzyme II complex composed of PtsG and Crr is involved in glucose transport. Also functions as a chemoreceptor monitoring the environment for changes in sugar concentration. It can also phosphorylate mannose, methyl alpha-glucoside and 2-deoxy-glucose. The protein is PTS system glucose-specific EIICB component (ptsG) of Salmonella typhimurium (strain LT2 / SGSC1412 / ATCC 700720).